We begin with the raw amino-acid sequence, 327 residues long: Secondary metabolism regulator LAE1 (327 aa).

This sequence belongs to the methyltransferase superfamily. LaeA methyltransferase family.

It is found in the nucleus. It catalyses the reaction L-methionyl-[protein] + S-adenosyl-L-methionine = S-methyl-L-methionyl-[protein] + S-adenosyl-L-homocysteine. Secondary metabolism regulator that controls the expression of the tenuazonic acid biosynthesis cluster. Methyltransferase that performs automethylation. No other methyl-accepting substrate has been identified yet. The protein is Secondary metabolism regulator LAE1 of Pyricularia oryzae (strain 70-15 / ATCC MYA-4617 / FGSC 8958) (Rice blast fungus).